Reading from the N-terminus, the 199-residue chain is UPF0637 protein LVIS_1261 (199 aa).

This sequence belongs to the UPF0637 family.

The polypeptide is UPF0637 protein LVIS_1261 (Levilactobacillus brevis (strain ATCC 367 / BCRC 12310 / CIP 105137 / JCM 1170 / LMG 11437 / NCIMB 947 / NCTC 947) (Lactobacillus brevis)).